Here is a 341-residue protein sequence, read N- to C-terminus: L-threonine 3-dehydrogenase (341 aa).

C38 is a binding site for Zn(2+). Active-site charge relay system residues include T40 and H43. Zn(2+) is bound by residues H63, E64, C93, C96, C99, and C107. Residues I175, D195, R200, L262–I264, and I286–Y287 contribute to the NAD(+) site.

It belongs to the zinc-containing alcohol dehydrogenase family. Homotetramer. It depends on Zn(2+) as a cofactor.

The protein localises to the cytoplasm. The catalysed reaction is L-threonine + NAD(+) = (2S)-2-amino-3-oxobutanoate + NADH + H(+). Its pathway is amino-acid degradation; L-threonine degradation via oxydo-reductase pathway; glycine from L-threonine: step 1/2. In terms of biological role, catalyzes the NAD(+)-dependent oxidation of L-threonine to 2-amino-3-ketobutyrate. This Shewanella baltica (strain OS185) protein is L-threonine 3-dehydrogenase.